The following is a 920-amino-acid chain: Histone-lysine N-methyltransferase, H3 lysine-4 specific (920 aa).

The RRM domain occupies 94 to 179 (TQVFVSNISP…KPLSVVLDRD (86 aa)). Residues 205 to 216 (KQRFEREDESSR) are compositionally biased toward basic and acidic residues. 2 disordered regions span residues 205–242 (KQRF…TLSN) and 448–485 (KRVD…YQLN). 2 stretches are compositionally biased toward polar residues: residues 233–242 (PSKNSQTLSN) and 453–462 (SKMNLSAGSK). Residues 463–476 (TKSKLQRRRRRRHE) are compositionally biased toward basic residues. Positions 749–754 (RVNNRR) match the RxxxRR motif motif. The 118-residue stretch at 781–898 (KQLHFGPSRI…HGEELTYDYK (118 aa)) folds into the SET domain. Tyr-897 contributes to the S-adenosyl-L-methionine binding site. The region spanning 904–920 (DKIPCLCGAPTCRGYLN) is the Post-SET domain.

The protein belongs to the class V-like SAM-binding methyltransferase superfamily. As to quaternary structure, component of the Set1C/COMPASS complex composed of ash2, sdc1, set1, shg1, spp1, swd1, swd2 and swd3.

It is found in the nucleus. The protein resides in the chromosome. It catalyses the reaction L-lysyl(4)-[histone H3] + 3 S-adenosyl-L-methionine = N(6),N(6),N(6)-trimethyl-L-lysyl(4)-[histone H3] + 3 S-adenosyl-L-homocysteine + 3 H(+). The catalysed reaction is N(6)-methyl-L-lysyl(4)-[histone H3] + S-adenosyl-L-methionine = N(6),N(6)-dimethyl-L-lysyl(4)-[histone H3] + S-adenosyl-L-homocysteine + H(+). The enzyme catalyses N(6),N(6)-dimethyl-L-lysyl(4)-[histone H3] + S-adenosyl-L-methionine = N(6),N(6),N(6)-trimethyl-L-lysyl(4)-[histone H3] + S-adenosyl-L-homocysteine + H(+). Catalytic component of the COMPASS (Set1C) complex that specifically mono-, di- and trimethylates histone H3 to form H3K4me1/2/3. Binds RNA which might negatively affect its histone methyltransferase activity. COMPASS recognizes ubiquitinated H2B on one face of the nucleosome which stimulates the methylation of H3 on the opposing face. Methylation promotes maintenance of active chromatin states at euchromatic chromosomal domains and is present throughout the cell cycle. Plays a role in telomere maintenance and DNA repair in an ATM kinase rad3-dependent pathway. Required for efficient telomeric and centromeric silencing. This Schizosaccharomyces pombe (strain 972 / ATCC 24843) (Fission yeast) protein is Histone-lysine N-methyltransferase, H3 lysine-4 specific.